A 189-amino-acid polypeptide reads, in one-letter code: GTPase HRas (189 aa).

10–17 (GARGVGKS) is a binding site for GTP. The Effector region signature appears at 32-40 (YDPTIEDSY). GTP contacts are provided by residues 57 to 61 (DTAGQ) and 116 to 119 (NKCD). 2 S-palmitoyl cysteine; by host lipidation sites follow: Cys-181 and Cys-184. Cys-186 carries the cysteine methyl ester; by host modification. Cys-186 carries S-farnesyl cysteine; by host lipidation. Positions 187-189 (VLS) are cleaved as a propeptide — removed in mature form.

Belongs to the small GTPase superfamily. Ras family.

The protein resides in the host cell membrane. The catalysed reaction is GTP + H2O = GDP + phosphate + H(+). Its activity is regulated as follows. Alternates between an inactive form bound to GDP and an active form bound to GTP. Activated by a guanine nucleotide-exchange factor (GEF) and inactivated by a GTPase-activating protein (GAP). In Mus musculus (Mouse), this protein is GTPase HRas (H-RAS).